A 425-amino-acid chain; its full sequence is Lysosome-associated membrane glycoprotein 2 (425 aa).

Residues 1–27 (MAPPRCPAGLALLLLLLGACGFFQSYA) form the signal peptide. The segment at 28–192 (VEVDVKDASN…SKKESRCYAD (165 aa)) is first lumenal domain. Over 28 to 389 (VEVDVKDASN…EECFADSDLN (362 aa)) the chain is Lumenal. N-linked (GlcNAc...) asparagine glycosylation is found at Asn-37, Asn-56, Asn-62, Asn-74, Asn-100, Asn-105, Asn-120, Asn-163, Asn-170, Asn-179, Asn-206, Asn-232, Asn-239, Asn-252, Asn-276, Asn-287, Asn-298, Asn-312, Asn-320, and Asn-331. An intrachain disulfide couples Cys-40 to Cys-78. Cys-153 and Cys-189 are joined by a disulfide. The interval 193–238 (TPTAAPTVLPTVANVTTASTTISPAPTTAPKPAENPVTGNYSLKTG) is hinge. The second lumenal domain stretch occupies residues 239 to 390 (NKTCLLATVG…ECFADSDLNF (152 aa)). Cys-242 and Cys-274 form a disulfide bridge. The cysteines at positions 345 and 382 are disulfide-linked. The chain crosses the membrane as a helical span at residues 390-414 (FLIPVAVGMALGFLIILVFISYIIG). The Cytoplasmic portion of the chain corresponds to 415 to 425 (RRKSRTGYQSV). An important for binding and subsequent lysosomal degradation of target proteins region spans residues 416 to 419 (RKSR).

This sequence belongs to the LAMP family. In terms of assembly, monomer. Forms large homooligomers. In terms of processing, extensively N-glycosylated. Contains a minor proportion of O-linked glycans.

It localises to the lysosome membrane. The protein localises to the endosome membrane. The protein resides in the cell membrane. Its subcellular location is the cytoplasmic vesicle. It is found in the autophagosome membrane. Functionally, lysosomal membrane glycoprotein which plays an important role in lysosome biogenesis, lysosomal pH regulation and autophagy. Plays an important role in chaperone-mediated autophagy, a process that mediates lysosomal degradation of proteins in response to various stresses and as part of the normal turnover of proteins with a long biological half-live. In the chaperone-mediated autophagy, acts downstream of chaperones, such as HSPA8/HSC70, which recognize and bind substrate proteins and mediate their recruitment to lysosomes, where target proteins bind LAMP2. Plays a role in lysosomal protein degradation in response to starvation. Required for the fusion of autophagosomes with lysosomes during autophagy. This chain is Lysosome-associated membrane glycoprotein 2 (LAMP2), found in Gallus gallus (Chicken).